The sequence spans 244 residues: Large ribosomal subunit protein uL30A (244 aa).

Residues 1–26 (MAAEKILTPESQLKKSKAQQKTAEQV) form a disordered region.

It belongs to the universal ribosomal protein uL30 family. As to quaternary structure, component of the large ribosomal subunit (LSU). Mature yeast ribosomes consist of a small (40S) and a large (60S) subunit. The 40S small subunit contains 1 molecule of ribosomal RNA (18S rRNA) and 33 different proteins (encoded by 57 genes). The large 60S subunit contains 3 rRNA molecules (25S, 5.8S and 5S rRNA) and 46 different proteins (encoded by 81 genes).

It is found in the cytoplasm. In terms of biological role, component of the ribosome, a large ribonucleoprotein complex responsible for the synthesis of proteins in the cell. The small ribosomal subunit (SSU) binds messenger RNAs (mRNAs) and translates the encoded message by selecting cognate aminoacyl-transfer RNA (tRNA) molecules. The large subunit (LSU) contains the ribosomal catalytic site termed the peptidyl transferase center (PTC), which catalyzes the formation of peptide bonds, thereby polymerizing the amino acids delivered by tRNAs into a polypeptide chain. The nascent polypeptides leave the ribosome through a tunnel in the LSU and interact with protein factors that function in enzymatic processing, targeting, and the membrane insertion of nascent chains at the exit of the ribosomal tunnel. The chain is Large ribosomal subunit protein uL30A from Saccharomyces cerevisiae (strain ATCC 204508 / S288c) (Baker's yeast).